The chain runs to 105 residues: Large ribosomal subunit protein bL21 (105 aa).

It belongs to the bacterial ribosomal protein bL21 family. Part of the 50S ribosomal subunit. Contacts protein L20.

Its function is as follows. This protein binds to 23S rRNA in the presence of protein L20. This Parafrankia sp. (strain EAN1pec) protein is Large ribosomal subunit protein bL21.